Reading from the N-terminus, the 301-residue chain is Phosducin-like protein (301 aa).

The residue at position 2 (Thr2) is an N-acetylthreonine. Residues 15 to 60 (YYYSTSEDEDSDHEDKDRGRGAPASSSTPAEAELAGEGISVNTGPK) form a disordered region. Ser20 and Ser25 each carry phosphoserine. The segment covering 36–49 (APASSSTPAEAELA) has biased composition (low complexity). The 264-residue stretch at 36–299 (APASSSTPAE…TCHSEDSDLE (264 aa)) folds into the Phosducin domain. A thioredoxin fold region spans residues 158-301 (FKQVLEIPSG…HSEDSDLEID (144 aa)). A phosphoserine mark is found at Ser226, Ser293, and Ser296.

It belongs to the phosducin family. Interacts with the CCT chaperonin complex. Forms a complex with the beta and gamma subunits of the GTP-binding protein, transducin.

It localises to the cell projection. It is found in the cilium. Functionally, functions as a co-chaperone for CCT in the assembly of heterotrimeric G protein complexes, facilitates the assembly of both Gbeta-Ggamma and RGS-Gbeta5 heterodimers. Also acts as a positive regulator of hedgehog signaling and regulates ciliary function. This chain is Phosducin-like protein (Pdcl), found in Rattus norvegicus (Rat).